The sequence spans 337 residues: MQIVEQMKDKALAELNLVKDKKTLDDIRVKYLGKKGELTEMMKLIATLPNDEKPKLGQAVNIAKQALQEAINLKLANFEEQELNEKLAQEKIDITLTGVGQNQGSLHPVTKTLNRIEAFFKQNGFAIEFGPEIESDYYNFETLNIPSHHPARAMHDTFYIDETHVLRTHTSGVQIRTMEKQQPPIRIIAPGRVYRCDSDITHTPMFHQVEGLLVDKDVSFADLKGLLHAFLNSFFEKDLKVRFRPSYFPFTEPSAEADIECVMCDGKGCRVCKHTGWLEVLGCGMVHPKVLKAGNIDSEKYQGFAFGMGVERLSMLRYGIDDLRMFFENDLRFLKQF.

Glutamate 252 serves as a coordination point for Mg(2+).

This sequence belongs to the class-II aminoacyl-tRNA synthetase family. Phe-tRNA synthetase alpha subunit type 1 subfamily. Tetramer of two alpha and two beta subunits. Mg(2+) serves as cofactor.

It localises to the cytoplasm. The catalysed reaction is tRNA(Phe) + L-phenylalanine + ATP = L-phenylalanyl-tRNA(Phe) + AMP + diphosphate + H(+). This chain is Phenylalanine--tRNA ligase alpha subunit, found in Francisella tularensis subsp. mediasiatica (strain FSC147).